Here is a 465-residue protein sequence, read N- to C-terminus: MTIHIYNTLTRQKEEFIPLEENKVKMYVCGPTVYNYIHIGNARPPMVFDTVRRYLEYKGYDVQYVSNFTDVDDKLIKAANELGEDVPTIADRFVEAYFEDVTALGCKHATVHPRVTENMDIIIEFIQELVNKGYAYESEGDVYFRTKEFEGYGKLSHQPIADLRHGARIEVGEKKQDPLDFALWKAAKEGEIFWESPWGQGRPGWHIECSAMARKYLGDTIDIHAGGQDLAFPHHENEIAQSEALTGKTFARYWMHNGYININNEKMSKSLGNFILVHDIIKQYDPQLIRFFMLSVHYRHPINFSEELLQSTNNGLERIKTAYGNLKHRMESSTDLTDHNEKWLADLEKFQTAFEEAMNDDFNTANAITELYNVANHANQYLLEEHTSTVVIEAYVKQLETLFDILGLELAQEELLDEEIEALIQKRIEARKNRDFALSDQIRDDLKDRNIILEDTAQGTRWKRG.

Cys29 is a binding site for Zn(2+). Positions 31 to 41 (PTVYNYIHIGN) match the 'HIGH' region motif. Residues Cys209, His234, and Glu238 each contribute to the Zn(2+) site. The 'KMSKS' region motif lies at 266 to 270 (KMSKS). ATP is bound at residue Lys269. Position 270 is a phosphoserine (Ser270).

The protein belongs to the class-I aminoacyl-tRNA synthetase family. In terms of assembly, monomer. Zn(2+) is required as a cofactor.

It is found in the cytoplasm. The enzyme catalyses tRNA(Cys) + L-cysteine + ATP = L-cysteinyl-tRNA(Cys) + AMP + diphosphate. The chain is Cysteine--tRNA ligase from Bacillus cereus (strain 03BB102).